Reading from the N-terminus, the 414-residue chain is Secreted beta-glucosidase sun1 (414 aa).

A signal peptide spans 1–19; the sequence is MKFNTVALTLATAGSLVTA. N80 carries an N-linked (GlcNAc...) asparagine glycan. A compositionally biased stretch (low complexity) spans 115 to 140; the sequence is TSASSSETVQTPAASSSSASSSSTAT. Positions 115 to 141 are disordered; it reads TSASSSETVQTPAASSSSASSSSTATG. N377 is a glycosylation site (N-linked (GlcNAc...) asparagine).

Belongs to the SUN family. In terms of processing, highly glycosylated.

The protein localises to the secreted. The protein resides in the cell wall. Its function is as follows. Cell surface beta-glucosidase involved in cell wall biosynthesis and septation, and thus required for normal growth and correct hyphal morphogenesis. Has hydrolytic activity on linear (1-&gt;3)-beta-D-glucans such as laminaribiose and other laminarioligosaccharides. Also has a minor transferase activity. The chain is Secreted beta-glucosidase sun1 (sun1) from Aspergillus fumigatus (strain ATCC MYA-4609 / CBS 101355 / FGSC A1100 / Af293) (Neosartorya fumigata).